The following is a 318-amino-acid chain: NADH-quinone oxidoreductase subunit H 2 (318 aa).

9 helical membrane passes run 4–24 (LLIA…AGVF), 77–97 (LAPA…AFAP), 106–126 (VGVL…VLGA), 146–166 (LAYE…AGSF), 179–199 (LWFI…GLAA), 214–234 (LVAG…FLGE), 238–258 (ILLV…GPIL), 262–282 (IWFG…RAAL), and 293–313 (FAWK…AWIA).

This sequence belongs to the complex I subunit 1 family. In terms of assembly, NDH-1 is composed of 14 different subunits. Subunits NuoA, H, J, K, L, M, N constitute the membrane sector of the complex.

Its subcellular location is the cell inner membrane. The catalysed reaction is a quinone + NADH + 5 H(+)(in) = a quinol + NAD(+) + 4 H(+)(out). In terms of biological role, NDH-1 shuttles electrons from NADH, via FMN and iron-sulfur (Fe-S) centers, to quinones in the respiratory chain. The immediate electron acceptor for the enzyme in this species is believed to be ubiquinone. Couples the redox reaction to proton translocation (for every two electrons transferred, four hydrogen ions are translocated across the cytoplasmic membrane), and thus conserves the redox energy in a proton gradient. This subunit may bind ubiquinone. The polypeptide is NADH-quinone oxidoreductase subunit H 2 (Cereibacter sphaeroides (strain ATCC 17023 / DSM 158 / JCM 6121 / CCUG 31486 / LMG 2827 / NBRC 12203 / NCIMB 8253 / ATH 2.4.1.) (Rhodobacter sphaeroides)).